Consider the following 388-residue polypeptide: Dual-specificity RNA methyltransferase RlmN (388 aa).

The active-site Proton acceptor is the Glu-109. In terms of domain architecture, Radical SAM core spans 115–354 (EEDRATLCVS…TIVRKTRGDD (240 aa)). Cys-122 and Cys-359 are oxidised to a cystine. 3 residues coordinate [4Fe-4S] cluster: Cys-129, Cys-133, and Cys-136. Residues 183–184 (GE), Ser-215, 237–239 (SLH), and Asn-316 each bind S-adenosyl-L-methionine. Residue Cys-359 is the S-methylcysteine intermediate of the active site.

It belongs to the radical SAM superfamily. RlmN family. [4Fe-4S] cluster is required as a cofactor.

The protein resides in the cytoplasm. It carries out the reaction adenosine(2503) in 23S rRNA + 2 reduced [2Fe-2S]-[ferredoxin] + 2 S-adenosyl-L-methionine = 2-methyladenosine(2503) in 23S rRNA + 5'-deoxyadenosine + L-methionine + 2 oxidized [2Fe-2S]-[ferredoxin] + S-adenosyl-L-homocysteine. The enzyme catalyses adenosine(37) in tRNA + 2 reduced [2Fe-2S]-[ferredoxin] + 2 S-adenosyl-L-methionine = 2-methyladenosine(37) in tRNA + 5'-deoxyadenosine + L-methionine + 2 oxidized [2Fe-2S]-[ferredoxin] + S-adenosyl-L-homocysteine. Its function is as follows. Specifically methylates position 2 of adenine 2503 in 23S rRNA and position 2 of adenine 37 in tRNAs. m2A2503 modification seems to play a crucial role in the proofreading step occurring at the peptidyl transferase center and thus would serve to optimize ribosomal fidelity. This Klebsiella pneumoniae subsp. pneumoniae (strain ATCC 700721 / MGH 78578) protein is Dual-specificity RNA methyltransferase RlmN.